A 193-amino-acid chain; its full sequence is Superoxide dismutase [Fe] (193 aa).

Histidine 27, histidine 74, aspartate 157, and histidine 161 together coordinate Fe cation.

The protein belongs to the iron/manganese superoxide dismutase family. As to quaternary structure, homodimer. It depends on Fe cation as a cofactor.

It carries out the reaction 2 superoxide + 2 H(+) = H2O2 + O2. Destroys superoxide anion radicals which are normally produced within the cells and which are toxic to biological systems. This is Superoxide dismutase [Fe] (sodB) from Salmonella typhimurium (strain LT2 / SGSC1412 / ATCC 700720).